The chain runs to 156 residues: Ribosomal RNA large subunit methyltransferase H (156 aa).

Residues Leu-73, Gly-104, and 123-128 (LSALTL) each bind S-adenosyl-L-methionine.

The protein belongs to the RNA methyltransferase RlmH family. Homodimer.

The protein resides in the cytoplasm. The enzyme catalyses pseudouridine(1915) in 23S rRNA + S-adenosyl-L-methionine = N(3)-methylpseudouridine(1915) in 23S rRNA + S-adenosyl-L-homocysteine + H(+). Specifically methylates the pseudouridine at position 1915 (m3Psi1915) in 23S rRNA. The sequence is that of Ribosomal RNA large subunit methyltransferase H from Shewanella oneidensis (strain ATCC 700550 / JCM 31522 / CIP 106686 / LMG 19005 / NCIMB 14063 / MR-1).